Consider the following 175-residue polypeptide: Translation initiation factor IF-3 (175 aa).

This sequence belongs to the IF-3 family. Monomer.

It localises to the cytoplasm. Its function is as follows. IF-3 binds to the 30S ribosomal subunit and shifts the equilibrium between 70S ribosomes and their 50S and 30S subunits in favor of the free subunits, thus enhancing the availability of 30S subunits on which protein synthesis initiation begins. The protein is Translation initiation factor IF-3 of Staphylococcus aureus (strain USA300).